Here is a 753-residue protein sequence, read N- to C-terminus: 5-methyltetrahydropteroyltriglutamate--homocysteine methyltransferase (753 aa).

5-methyltetrahydropteroyltri-L-glutamate is bound by residues 17-20 (RELK) and Lys117. L-homocysteine is bound by residues 431-433 (IGS) and Glu484. L-methionine is bound by residues 431-433 (IGS) and Glu484. 5-methyltetrahydropteroyltri-L-glutamate contacts are provided by residues 515–516 (RC) and Trp561. L-homocysteine is bound at residue Asp599. Asp599 serves as a coordination point for L-methionine. 5-methyltetrahydropteroyltri-L-glutamate is bound at residue Glu605. His641, Cys643, and Glu665 together coordinate Zn(2+). His694 acts as the Proton donor in catalysis. Cys726 serves as a coordination point for Zn(2+).

Belongs to the vitamin-B12 independent methionine synthase family. Requires Zn(2+) as cofactor.

The enzyme catalyses 5-methyltetrahydropteroyltri-L-glutamate + L-homocysteine = tetrahydropteroyltri-L-glutamate + L-methionine. The protein operates within amino-acid biosynthesis; L-methionine biosynthesis via de novo pathway; L-methionine from L-homocysteine (MetE route): step 1/1. Its function is as follows. Catalyzes the transfer of a methyl group from 5-methyltetrahydrofolate to homocysteine resulting in methionine formation. This chain is 5-methyltetrahydropteroyltriglutamate--homocysteine methyltransferase, found in Shigella flexneri serotype 5b (strain 8401).